The sequence spans 593 residues: Monoterpene synthase 7, chloroplastic (593 aa).

The N-terminal 39 residues, 1–39 (MSVSLSFAASATFGFRGGLGGFSRPAAAIKQWRCLPRIQ), are a transit peptide targeting the chloroplast. Mg(2+)-binding residues include aspartate 348, aspartate 352, aspartate 491, and glutamate 499. Residues 348–352 (DDVYD) carry the DDXXD motif motif.

The protein belongs to the terpene synthase family. Tpsa subfamily. Requires Mg(2+) as cofactor. Mn(2+) serves as cofactor. In terms of tissue distribution, highly expressed in flowers, petals and sepals, but almost undetectable in vegetative organs.

It is found in the plastid. The protein localises to the chloroplast. The enzyme catalyses (2E)-geranyl diphosphate = sabinene + diphosphate. It carries out the reaction (2E)-geranyl diphosphate = terpinolene + diphosphate. It catalyses the reaction (2E)-geranyl diphosphate = alpha-pinene + diphosphate. The catalysed reaction is (2E)-geranyl diphosphate = beta-pinene + diphosphate. The enzyme catalyses (2E)-geranyl diphosphate = beta-myrcene + diphosphate. It carries out the reaction (2E)-geranyl diphosphate = alpha-terpinene + diphosphate. It catalyses the reaction (2E)-geranyl diphosphate = beta-phellandrene + diphosphate. The catalysed reaction is (2E)-geranyl diphosphate = gamma-terpinene + diphosphate. Its pathway is secondary metabolite biosynthesis; terpenoid biosynthesis. Functionally, monoterpene synthase involved in the biosynthesis of volatile compounds present in floral scent. Mediates the conversion of (2E)-geranyl diphosphate (GPP) into sabinene and sub-products such as alpha-thujene, alpha-pinene, beta-pinene, myrcene, alpha-phellandrene, alpha-terpinene, beta-phellandrene, gamma-terpinene and terpinolene. Unable to use farnesyl diphosphate (FPP) as substrate. The protein is Monoterpene synthase 7, chloroplastic of Hedychium coronarium (White butterfly ginger-lily).